The chain runs to 206 residues: Urease accessory protein UreG (206 aa).

14–21 (GPVGSGKT) contacts GTP.

It belongs to the SIMIBI class G3E GTPase family. UreG subfamily. In terms of assembly, homodimer. UreD, UreF and UreG form a complex that acts as a GTP-hydrolysis-dependent molecular chaperone, activating the urease apoprotein by helping to assemble the nickel containing metallocenter of UreC. The UreE protein probably delivers the nickel.

It localises to the cytoplasm. Facilitates the functional incorporation of the urease nickel metallocenter. This process requires GTP hydrolysis, probably effectuated by UreG. This chain is Urease accessory protein UreG, found in Aliivibrio fischeri (strain ATCC 700601 / ES114) (Vibrio fischeri).